We begin with the raw amino-acid sequence, 297 residues long: 4-diphosphocytidyl-2-C-methyl-D-erythritol kinase (297 aa).

Lys-14 is an active-site residue. Residue 99–109 (PVAAGIGGGSA) coordinates ATP. Asp-141 is a catalytic residue.

The protein belongs to the GHMP kinase family. IspE subfamily.

It carries out the reaction 4-CDP-2-C-methyl-D-erythritol + ATP = 4-CDP-2-C-methyl-D-erythritol 2-phosphate + ADP + H(+). The protein operates within isoprenoid biosynthesis; isopentenyl diphosphate biosynthesis via DXP pathway; isopentenyl diphosphate from 1-deoxy-D-xylulose 5-phosphate: step 3/6. Its function is as follows. Catalyzes the phosphorylation of the position 2 hydroxy group of 4-diphosphocytidyl-2C-methyl-D-erythritol. The sequence is that of 4-diphosphocytidyl-2-C-methyl-D-erythritol kinase from Bradyrhizobium diazoefficiens (strain JCM 10833 / BCRC 13528 / IAM 13628 / NBRC 14792 / USDA 110).